Reading from the N-terminus, the 199-residue chain is Recombination protein RecR (199 aa).

A C4-type zinc finger spans residues 57–72 (CQSCRTYTEETLCPIC). Residues 81 to 176 (STICVVETPA…MISRIAHGVP (96 aa)) enclose the Toprim domain.

This sequence belongs to the RecR family.

May play a role in DNA repair. It seems to be involved in an RecBC-independent recombinational process of DNA repair. It may act with RecF and RecO. This Shewanella putrefaciens (strain CN-32 / ATCC BAA-453) protein is Recombination protein RecR.